The chain runs to 176 residues: ATP-dependent protease subunit HslV (176 aa).

Residue T2 is part of the active site. G157, C160, and T163 together coordinate Na(+).

The protein belongs to the peptidase T1B family. HslV subfamily. As to quaternary structure, a double ring-shaped homohexamer of HslV is capped on each side by a ring-shaped HslU homohexamer. The assembly of the HslU/HslV complex is dependent on binding of ATP.

The protein localises to the cytoplasm. The catalysed reaction is ATP-dependent cleavage of peptide bonds with broad specificity.. With respect to regulation, allosterically activated by HslU binding. Its function is as follows. Protease subunit of a proteasome-like degradation complex believed to be a general protein degrading machinery. This Pseudomonas fluorescens (strain ATCC BAA-477 / NRRL B-23932 / Pf-5) protein is ATP-dependent protease subunit HslV.